A 127-amino-acid polypeptide reads, in one-letter code: Fluoride-specific ion channel FluC 1 (127 aa).

Transmembrane regions (helical) follow at residues 4–24 (TLLA…LVSL), 35–55 (VGTL…LALF), 71–91 (TGFC…VYLI), and 101–121 (GTIL…FILV). The Na(+) site is built by Gly75 and Thr78.

This sequence belongs to the fluoride channel Fluc/FEX (TC 1.A.43) family.

The protein resides in the cell inner membrane. It carries out the reaction fluoride(in) = fluoride(out). Na(+) is not transported, but it plays an essential structural role and its presence is essential for fluoride channel function. Fluoride-specific ion channel. Important for reducing fluoride concentration in the cell, thus reducing its toxicity. This Yersinia pseudotuberculosis serotype I (strain IP32953) protein is Fluoride-specific ion channel FluC 1.